Reading from the N-terminus, the 668-residue chain is DNA mismatch repair protein MutL (668 aa).

The interval Thr-437–Lys-459 is disordered. The span at Tyr-438–Lys-459 shows a compositional bias: polar residues.

This sequence belongs to the DNA mismatch repair MutL/HexB family.

This protein is involved in the repair of mismatches in DNA. It is required for dam-dependent methyl-directed DNA mismatch repair. May act as a 'molecular matchmaker', a protein that promotes the formation of a stable complex between two or more DNA-binding proteins in an ATP-dependent manner without itself being part of a final effector complex. The sequence is that of DNA mismatch repair protein MutL from Leuconostoc citreum (strain KM20).